The sequence spans 178 residues: Large ribosomal subunit protein uL6 (178 aa).

This sequence belongs to the universal ribosomal protein uL6 family. As to quaternary structure, part of the 50S ribosomal subunit.

Functionally, this protein binds to the 23S rRNA, and is important in its secondary structure. It is located near the subunit interface in the base of the L7/L12 stalk, and near the tRNA binding site of the peptidyltransferase center. In Campylobacter curvus (strain 525.92), this protein is Large ribosomal subunit protein uL6.